Reading from the N-terminus, the 905-residue chain is Isoleucine--tRNA ligase (905 aa).

The 'HIGH' region signature appears at 56 to 66 (PYANGNIHMGT). L-isoleucyl-5'-AMP is bound at residue Glu563. The 'KMSKS' region motif lies at 604–608 (KMSKS). Lys607 lines the ATP pocket.

It belongs to the class-I aminoacyl-tRNA synthetase family. IleS type 1 subfamily. As to quaternary structure, monomer.

Its subcellular location is the cytoplasm. It carries out the reaction tRNA(Ile) + L-isoleucine + ATP = L-isoleucyl-tRNA(Ile) + AMP + diphosphate. In terms of biological role, catalyzes the attachment of isoleucine to tRNA(Ile). As IleRS can inadvertently accommodate and process structurally similar amino acids such as valine, to avoid such errors it has two additional distinct tRNA(Ile)-dependent editing activities. One activity is designated as 'pretransfer' editing and involves the hydrolysis of activated Val-AMP. The other activity is designated 'posttransfer' editing and involves deacylation of mischarged Val-tRNA(Ile). This Pelagibacter ubique (strain HTCC1062) protein is Isoleucine--tRNA ligase.